Consider the following 586-residue polypeptide: Probable transporter AQR1 (586 aa).

Disordered regions lie at residues 1 to 44 (MSRS…FEGA) and 61 to 82 (EGDL…PTQQ). At 1 to 99 (MSRSNSIYTE…PYTLLSYGQK (99 aa)) the chain is on the extracellular side. Positions 19–40 (NEQHLTREYTKPDGQTKSEKLN) are enriched in basic and acidic residues. The chain crosses the membrane as a helical span at residues 100-120 (WGMVAILTMCGFWSSLGSPIY). Topologically, residues 121–139 (YPALRQLEKQFNVDENMVN) are cytoplasmic. A helical membrane pass occupies residues 140–160 (VTVVVYLLFQGISPTVSGGLA). The Extracellular portion of the chain corresponds to 161 to 166 (DCFGRR). Residues 167-187 (PIILAGMLIYVIASIGLACAP) form a helical membrane-spanning segment. Serine 188 is a topological domain (cytoplasmic). Residues 189-209 (YGVIIFLRCIQSIGISPTIAI) form a helical membrane-spanning segment. Residues 210-225 (SSGVVGDFTLKHERGT) lie on the Extracellular side of the membrane. Residues 226-246 (FVGATSGFVLLGQCFGSLIGA) form a helical membrane-spanning segment. Residues 247–255 (VLTARWDWR) are Cytoplasmic-facing. Residues 256–276 (AIFWFLTIGCGSCFLIAFLIL) form a helical membrane-spanning segment. Topologically, residues 277-334 (PETKRTIAGNLSIKPKRFINRAPIFLLGPVRRRFKYDNPDYETLDPTIPKLDLSSAGK) are extracellular. The helical transmembrane segment at 335–355 (ILVLPEIILSLFPSGLLFAMW) threads the bilayer. The Cytoplasmic segment spans residues 356-374 (TLMLSSISSGLSVAPYNYH). The helical transmembrane segment at 375-395 (LVIIGVCYLPGGIGGLMGSFF) threads the bilayer. The Extracellular segment spans residues 396-433 (TGRIIDMYFKRKIKKFEQDKANGLIPQDAEINMFKVRL). A helical transmembrane segment spans residues 434–454 (VCLLPQNFLAVVAYLLFGWSI). Residues 455 to 459 (DKGWR) are Cytoplasmic-facing. Residues 460-480 (IESILITSFVCSYCAMSTLST) traverse the membrane as a helical segment. At 481–523 (STTLLVDLYPTKSSTASSCFNFVRCSLSTIFMGCFAKMKAAMT) the chain is on the extracellular side. Residues 524 to 544 (VGGTFTFLCALVFFFNFLMFI) form a helical membrane-spanning segment. Residues 545 to 586 (PMKYGMKWREDRLLKQQRQSWLNTLAVKAKKGTKRDQNDNHN) lie on the Cytoplasmic side of the membrane.

Belongs to the major facilitator superfamily. CAR1 family.

The protein localises to the membrane. In terms of biological role, probable transporter that confers resistance to short-chain monocarboxylic acids and quinidine. The chain is Probable transporter AQR1 (AQR1) from Saccharomyces cerevisiae (strain ATCC 204508 / S288c) (Baker's yeast).